The chain runs to 416 residues: Serine protease inhibitor A3K (416 aa).

Positions 1-20 are cleaved as a signal peptide; sequence MAFIAALGLLMAGICPAVLC. 4 N-linked (GlcNAc...) asparagine glycosylation sites follow: Asn102, Asn182, Asn220, and Asn267. Residues 365-392 are RCL; that stretch reads GTEGAAATAVTAALKSLPQTIPLLNFNR.

This sequence belongs to the serpin family. In terms of processing, N-glycosylated. As to expression, liver and plasma.

The protein resides in the secreted. Binds to and inhibits kallikreins. Inhibits trypsin but not chymotrypsin or elastase. The protein is Serine protease inhibitor A3K (Serpina3k) of Rattus norvegicus (Rat).